The following is a 347-amino-acid chain: uncharacterized protein (347 aa).

Residues C39, H65, C95, C98, C101, C109, and E152 each coordinate Zn(2+).

This sequence belongs to the zinc-containing alcohol dehydrogenase family. It depends on Zn(2+) as a cofactor.

This is an uncharacterized protein from Escherichia coli (strain K12).